A 188-amino-acid chain; its full sequence is Large ribosomal subunit protein bL35m (188 aa).

Belongs to the bacterial ribosomal protein bL35 family.

It localises to the mitochondrion. This is Large ribosomal subunit protein bL35m (MRPL35) from Bos taurus (Bovine).